Consider the following 45-residue polypeptide: Metallothionein-like protein 1A (45 aa).

Belongs to the metallothionein superfamily. Type 15 family. In terms of tissue distribution, expressed in phloem and mesophyll cells of leaves, vascular tissues of cotyledons, sepals and petals. Expressed in anthers. Expressed in root endodermis and at lower levels in cortex of mature region of roots.

Functionally, metallothioneins have a high content of cysteine residues that bind various heavy metals. Functions as a metal chelator of copper (Cu) and zinc (Zn). Plays a role in Cu homeostasis in the roots under elevated Cu concentration. Functions cooperatively with the phytochelatin synthase PCS1 to protect plants from Cu and cadmium (Cd) toxicity. Plays a role in Cu homeostasis, specifically in the remobilization of Cu from senescing leaves. The mobilization of Cu from internal sources is important for seed development. Confers tolerance to Cd and plays a role in Cd and Zn homeostasis. The chain is Metallothionein-like protein 1A (MT1A) from Arabidopsis thaliana (Mouse-ear cress).